The primary structure comprises 195 residues: dTTP/UTP pyrophosphatase (195 aa).

Asp73 serves as the catalytic Proton acceptor.

The protein belongs to the Maf family. YhdE subfamily. It depends on a divalent metal cation as a cofactor.

The protein localises to the cytoplasm. It catalyses the reaction dTTP + H2O = dTMP + diphosphate + H(+). The catalysed reaction is UTP + H2O = UMP + diphosphate + H(+). Its function is as follows. Nucleoside triphosphate pyrophosphatase that hydrolyzes dTTP and UTP. May have a dual role in cell division arrest and in preventing the incorporation of modified nucleotides into cellular nucleic acids. The sequence is that of dTTP/UTP pyrophosphatase from Desulfotalea psychrophila (strain LSv54 / DSM 12343).